The primary structure comprises 162 residues: Phosphopantetheine adenylyltransferase (162 aa).

Residue S9 participates in substrate binding. Residues 9–10 (SF) and H17 each bind ATP. The substrate site is built by K41, I77, and K91. Residues 92–94 (GLR), E102, and 126–132 (YAFLSSS) each bind ATP.

Belongs to the bacterial CoaD family. Homohexamer. Mg(2+) is required as a cofactor.

The protein localises to the cytoplasm. The catalysed reaction is (R)-4'-phosphopantetheine + ATP + H(+) = 3'-dephospho-CoA + diphosphate. It functions in the pathway cofactor biosynthesis; coenzyme A biosynthesis; CoA from (R)-pantothenate: step 4/5. In terms of biological role, reversibly transfers an adenylyl group from ATP to 4'-phosphopantetheine, yielding dephospho-CoA (dPCoA) and pyrophosphate. The protein is Phosphopantetheine adenylyltransferase of Frankia casuarinae (strain DSM 45818 / CECT 9043 / HFP020203 / CcI3).